The primary structure comprises 466 residues: Asparagine--tRNA ligase (466 aa).

Belongs to the class-II aminoacyl-tRNA synthetase family. As to quaternary structure, homodimer.

The protein resides in the cytoplasm. The enzyme catalyses tRNA(Asn) + L-asparagine + ATP = L-asparaginyl-tRNA(Asn) + AMP + diphosphate + H(+). In Enterobacter sp. (strain 638), this protein is Asparagine--tRNA ligase.